The chain runs to 122 residues: Large ribosomal subunit protein uL14 (122 aa).

The protein belongs to the universal ribosomal protein uL14 family. Part of the 50S ribosomal subunit. Forms a cluster with proteins L3 and L19. In the 70S ribosome, L14 and L19 interact and together make contacts with the 16S rRNA in bridges B5 and B8.

Its function is as follows. Binds to 23S rRNA. Forms part of two intersubunit bridges in the 70S ribosome. The sequence is that of Large ribosomal subunit protein uL14 from Variovorax paradoxus (strain S110).